We begin with the raw amino-acid sequence, 186 residues long: Large ribosomal subunit protein uL5 (186 aa).

It belongs to the universal ribosomal protein uL5 family. Part of the 50S ribosomal subunit; part of the 5S rRNA/L5/L18/L25 subcomplex. Contacts the 5S rRNA and the P site tRNA. Forms a bridge to the 30S subunit in the 70S ribosome.

Its function is as follows. This is one of the proteins that bind and probably mediate the attachment of the 5S RNA into the large ribosomal subunit, where it forms part of the central protuberance. In the 70S ribosome it contacts protein S13 of the 30S subunit (bridge B1b), connecting the 2 subunits; this bridge is implicated in subunit movement. Contacts the P site tRNA; the 5S rRNA and some of its associated proteins might help stabilize positioning of ribosome-bound tRNAs. In Karelsulcia muelleri (strain GWSS) (Sulcia muelleri), this protein is Large ribosomal subunit protein uL5.